The primary structure comprises 318 residues: Olfactory receptor 13C7 (318 aa).

At 1–27 the chain is on the extracellular side; that stretch reads MVSANQTASVTEFILLGLSAHPKLEKT. A helical transmembrane segment spans residues 28-48; sequence FFVLILLMYLVILLGNGVLIL. At 49 to 61 the chain is on the cytoplasmic side; it reads MTVSNSHLHMPMY. The chain crosses the membrane as a helical span at residues 62 to 82; sequence FFLGNLSFLDICYTTSSVPLI. The Extracellular segment spans residues 83–100; it reads LDSFLTPRKTISFSACAV. The chain crosses the membrane as a helical span at residues 101–121; that stretch reads QMFLSFAMGATECVLLSMMAF. Over 122 to 181 the chain is Cytoplasmic; sequence DRYVAICNPLRYPVVMSKAAYMPKAAGSWVAGSTASMVQTSLAMRLPFCGDNIINHFTCE. The helical transmembrane segment at 182-202 threads the bilayer; it reads ILAVLKLACADISVNVISMGV. At 203 to 205 the chain is on the extracellular side; that stretch reads TNV. A helical membrane pass occupies residues 206 to 226; that stretch reads IFLGVPVLFISFSYVFIIATI. The Cytoplasmic portion of the chain corresponds to 227-238; it reads LRIPSAEGRKKA. The chain crosses the membrane as a helical span at residues 239-259; that stretch reads FSTCSAHLTVVVIFYGTILFM. The Extracellular portion of the chain corresponds to 260–278; the sequence is YGKPKSKDPLGADKQDLAD. A helical transmembrane segment spans residues 279 to 289; sequence KLISLFYGVVT. Residues 290–318 are Cytoplasmic-facing; sequence PMLNPIIYSLRNKDVKAAVRDLIFQKCFA.

It belongs to the G-protein coupled receptor 1 family.

It is found in the cell membrane. Its function is as follows. Odorant receptor. This chain is Olfactory receptor 13C7, found in Homo sapiens (Human).